A 166-amino-acid polypeptide reads, in one-letter code: Large ribosomal subunit protein mL41 (166 aa).

The N-terminal 26 residues, 1 to 26, are a transit peptide targeting the mitochondrion; that stretch reads MQNCIKLVPLALKCPQRAISTSAVLD.

This sequence belongs to the mitochondrion-specific ribosomal protein mL41 family. Component of the mitochondrial ribosome large subunit (39S) which comprises a 16S rRNA and about 50 distinct proteins.

It localises to the mitochondrion. This chain is Large ribosomal subunit protein mL41 (mRpL41), found in Drosophila pseudoobscura pseudoobscura (Fruit fly).